We begin with the raw amino-acid sequence, 548 residues long: Lysine--tRNA ligase (548 aa).

The 'HIGH' region motif lies at 52–60 (PSGLPHIGT). Positions 300-304 (KISKS) match the 'KMSKS' region motif. ATP is bound at residue Lys-303.

This sequence belongs to the class-I aminoacyl-tRNA synthetase family.

The protein localises to the cytoplasm. The catalysed reaction is tRNA(Lys) + L-lysine + ATP = L-lysyl-tRNA(Lys) + AMP + diphosphate. The sequence is that of Lysine--tRNA ligase from Mesorhizobium japonicum (strain LMG 29417 / CECT 9101 / MAFF 303099) (Mesorhizobium loti (strain MAFF 303099)).